We begin with the raw amino-acid sequence, 145 residues long: Large ribosomal subunit protein uL15 (145 aa).

Basic residues-rich tracts occupy residues 1–13 (MIRKTKKIRKQRG) and 22–33 (TKKRRGAGHRGG). A disordered region spans residues 1–41 (MIRKTKKIRKQRGSRSVGGGCTKKRRGAGHRGGRGQAGGNK).

This sequence belongs to the universal ribosomal protein uL15 family. Part of the 50S ribosomal subunit.

Its function is as follows. Binds to the 23S rRNA. In Methanosphaera stadtmanae (strain ATCC 43021 / DSM 3091 / JCM 11832 / MCB-3), this protein is Large ribosomal subunit protein uL15.